A 631-amino-acid polypeptide reads, in one-letter code: 1-deoxy-D-xylulose-5-phosphate synthase (631 aa).

Residues H74 and 115–117 (GHS) contribute to the thiamine diphosphate site. Residue D146 participates in Mg(2+) binding. Thiamine diphosphate contacts are provided by residues 147 to 148 (GA), N175, Y286, and E368. Residue N175 participates in Mg(2+) binding.

This sequence belongs to the transketolase family. DXPS subfamily. Homodimer. Mg(2+) serves as cofactor. Requires thiamine diphosphate as cofactor.

It carries out the reaction D-glyceraldehyde 3-phosphate + pyruvate + H(+) = 1-deoxy-D-xylulose 5-phosphate + CO2. It participates in metabolic intermediate biosynthesis; 1-deoxy-D-xylulose 5-phosphate biosynthesis; 1-deoxy-D-xylulose 5-phosphate from D-glyceraldehyde 3-phosphate and pyruvate: step 1/1. In terms of biological role, catalyzes the acyloin condensation reaction between C atoms 2 and 3 of pyruvate and glyceraldehyde 3-phosphate to yield 1-deoxy-D-xylulose-5-phosphate (DXP). This Natranaerobius thermophilus (strain ATCC BAA-1301 / DSM 18059 / JW/NM-WN-LF) protein is 1-deoxy-D-xylulose-5-phosphate synthase.